An 806-amino-acid chain; its full sequence is Mitochondrial intermediate peptidase (806 aa).

Residues 1–29 (MLSRHLTVLRSACRVSHDLRVPSTQAVRK) constitute a mitochondrion transit peptide. Position 581 (histidine 581) interacts with Zn(2+). Glutamate 582 is a catalytic residue. Zn(2+)-binding residues include histidine 585 and histidine 588.

The protein belongs to the peptidase M3 family. The cofactor is Zn(2+).

The protein resides in the mitochondrion matrix. It carries out the reaction Release of an N-terminal octapeptide as second stage of processing of some proteins imported into the mitochondrion.. Functionally, cleaves proteins, imported into the mitochondrion, to their mature size. While most mitochondrial precursor proteins are processed to the mature form in one step by mitochondrial processing peptidase (MPP), the sequential cleavage by MIP of an octapeptide after initial processing by MPP is a required step for a subgroup of nuclear-encoded precursor proteins destined for the matrix or the inner membrane. In Malassezia globosa (strain ATCC MYA-4612 / CBS 7966) (Dandruff-associated fungus), this protein is Mitochondrial intermediate peptidase (OCT1).